Here is a 192-residue protein sequence, read N- to C-terminus: MAAIPVDDCINFVGMKFIDNTLYFVADSDENLETDYFGKLEHKLSILRNLNDQVLFINQGDQPVFEDMPDSDCTDNAPRTEFIIYMYKDSLTRGLAVTISVNYKTMSTLSCENKIISFKEMSPPESINDEGNDIIFFQRSVPGHDDKIQFESSLYKGYFLACEKEKDLFKLILKKKDENGDKSIMFTVQNKN.

Residues 1–35 constitute a propeptide that is removed on maturation; it reads MAAIPVDDCINFVGMKFIDNTLYFVADSDENLETD.

It belongs to the IL-1 family. Forms a ternary complex with ligand-binding receptor subunit IL18R1 and signaling receptor subunit IL18RAP at the plasma membrane. Mature IL18 first binds to IL18R1 forming a low affinity binary complex, which then interacts with IL18RAP to form a high affinity ternary complex that signals inside the cell. Interacts with cargo receptor TMED10; the interaction mediates the translocation from the cytoplasm into the ERGIC (endoplasmic reticulum-Golgi intermediate compartment) and thereby secretion. In terms of processing, the pro-IL-18 precursor is processed by CASP1, CASP4 or CASP5 to yield its mature, active form. The pro-IL-18 precursor features autoinhibitory interactions between the propeptide and the post-cleavage-site region, preventing recognition by the IL18R1 receptor. Processing by CASP1, CASP4 or CASP5 induces conformational changes to generate critical receptor-binding sites. The mature form is then secreted and released in the extracellular milieu by passing through the gasdermin-D (GSDMD) pore. In contrast, cleavage by CASP3 inactivates IL18.

Its subcellular location is the cytoplasm. It localises to the cytosol. The protein localises to the secreted. Pro-inflammatory cytokine primarily involved in epithelial barrier repair, polarized T-helper 1 (Th1) cell and natural killer (NK) cell immune responses. Upon binding to IL18R1 and IL18RAP, forms a signaling ternary complex which activates NF-kappa-B, triggering synthesis of inflammatory mediators. Synergizes with IL12/interleukin-12 to induce IFNG synthesis from T-helper 1 (Th1) cells and natural killer (NK) cells. Involved in transduction of inflammation downstream of pyroptosis: its mature form is specifically released in the extracellular milieu by passing through the gasdermin-D (GSDMD) pore. This Felis catus (Cat) protein is Interleukin-18 (IL18).